The chain runs to 615 residues: TORTIFOLIA1-like protein 3 (615 aa).

HEAT repeat units lie at residues 44-81 (GNLQSFISVILSVDTGDKPAVRKHCIHLLAVLSVSLPL), 86-123 (PFLSKILTRITRRLRDPDSSIRSTCVAAVSAISSRTTK), 125-163 (PFYSAFMKPLADTLFTEQEVNAQIGAALCLAAAIDSASD), 168-205 (RLGQTLLPRLEKLVKCNAFKAKSAGVVVIGSVIGAGGL), and 213-250 (GGLKGLVDCLLSFLVSEDWAARKAAAEALGRLATMERN). Residues 288 to 446 (VPDLSEEVSP…HHVLSENPNS (159 aa)) form a disordered region. Polar residues predominate over residues 318–347 (RVGSTPAKSRTHLVNRSTPPGSSLATTARK). The span at 391–406 (DEQHCDHDENAKETSH) shows a compositional bias: basic and acidic residues. Over residues 407 to 426 (SSHNTVQKLGGVSSSLNGNI) the composition is skewed to polar residues. Serine 456 is modified (phosphoserine).

In Arabidopsis thaliana (Mouse-ear cress), this protein is TORTIFOLIA1-like protein 3.